Consider the following 774-residue polypeptide: Neprilysin-2 (774 aa).

The Cytoplasmic portion of the chain corresponds to 1-20 (MQTVIQNPNWWRRRNKLEKS). A helical; Signal-anchor for type II membrane protein membrane pass occupies residues 21 to 41 (LLVSLGIMFVVLATGFGLWIG). At 42 to 774 (KVLRTSPPSN…MNPVQKCEVW (733 aa)) the chain is on the extracellular side. The tract at residues 50-79 (SNPQATALHGDSTTINQVPTGTASKGKSGD) is disordered. Residues 60-74 (DSTTINQVPTGTASK) show a composition bias toward polar residues. The Peptidase M13 domain maps to 83-774 (VCLTQECIHT…MNPVQKCEVW (692 aa)). Disulfide bonds link Cys-84-Cys-89, Cys-107-Cys-759, Cys-115-Cys-719, Cys-171-Cys-424, and Cys-646-Cys-771. Asn-173, Asn-239, Asn-264, Asn-305, Asn-315, Asn-358, and Asn-554 each carry an N-linked (GlcNAc...) asparagine glycan. Residue His-609 coordinates Zn(2+). Glu-610 is an active-site residue. His-613 contacts Zn(2+). The N-linked (GlcNAc...) asparagine glycan is linked to Asn-653. Residue Glu-671 coordinates Zn(2+). Residue Asp-675 is the Proton donor of the active site.

It belongs to the peptidase M13 family. Requires Zn(2+) as cofactor. Post-translationally, N-glycosylated. The soluble form is probably produced by proteolytic cleavage. In terms of tissue distribution, detected in the stellate cells in the main segment and the bar-shaped cells in the initial segment of male and female Malpighian tubules (at protein level). Expressed in the spermatheca (at protein level). Expressed in the somatic cyst cells of the testes, with increased expression at the tail end of elongating cysts. Expressed in the ovaries with strong expression in the posterior polar cells and in border cells of stage 8, 9, and 10 follicles. In adults and third-instar larvae, expressed in the brain, ventral ganglion, and stellate cells. Also expressed in the foregut and the imaginal disks (eye, antennal and leg) of third-instar larvae. In stage 17 embryos, expressed in the tracheal system, foregut, hindgut and epidermis. Also expressed in the stellate cell progenitors of the caudal visceral mesoderm in embryos.

It is found in the cell membrane. Its subcellular location is the secreted. The enzyme catalyses Preferential cleavage of polypeptides between hydrophobic residues, particularly with Phe or Tyr at P1'.. Functionally, metalloendoprotease which cleaves peptides such as tachykinin peptide TK-2 at the amino side of hydrophobic residues. Functions in female fertility, embryogenesis and memory formation. Required in females for normal patterns of egg laying, probably due to its function in sperm retention and preventing sperm displacement by rival ejaculates. Also required for normal patterns of hatching due to its important role in early embryonic development. Required in the dorsal paired medial neurons for the proper formation of middle-term memory. Also required in the mushroom body neurons where it functions redundantly with neprilysins Nep3 and Nep4 in normal long-term memory formation. In Drosophila melanogaster (Fruit fly), this protein is Neprilysin-2.